We begin with the raw amino-acid sequence, 147 residues long: Hemoglobin subunit epsilon-1 (147 aa).

In terms of domain architecture, Globin spans 3–147; that stretch reads HFTAEEKAAI…VATALAHKYH (145 aa). Heme b is bound by residues His-64 and His-93.

It belongs to the globin family. As to quaternary structure, heterotetramer of two epsilon chains and two alpha chains. Red blood cells.

Functionally, beta-type chain found in early embryos. The protein is Hemoglobin subunit epsilon-1 (HBE1) of Capra hircus (Goat).